Consider the following 185-residue polypeptide: MKDMVFDELKQNMEKGLQALEKSFNKVRTGRASISLLDGIKADYYGTPTPLNQVATLSVPESRQILISPWDTSALNAIEKAIQKSDLGLVPNNDGKVIRISIPPLTEARRKELVKVVRKMAEECKVKLRNARRDANEEFKSMKKNNDISEDQMHDYQDQVQKMTDSYIEKSEDILVQKEKEIMEI.

The protein belongs to the RRF family.

Its subcellular location is the cytoplasm. Functionally, responsible for the release of ribosomes from messenger RNA at the termination of protein biosynthesis. May increase the efficiency of translation by recycling ribosomes from one round of translation to another. The sequence is that of Ribosome-recycling factor from Syntrophus aciditrophicus (strain SB).